The following is a 281-amino-acid chain: MQVIGRGGANILIDYGDPTWLWRCCIRWPDLLSSNNSYTIKNISYIKDYVEPLLHGLLCPMYLIDVDIEAIRPILSDFILNLDDKVVKVIKIKNLTNNTSNLILNNHFLKSYCSQNLQTVILELKPKWLYYDTDYCRNCTHNAFKGRGTKYCYNQLLMNPAHLELIFGECNIFPVKFKDAMHEYLRNDNNIFKILYDLQKKLTKNTTPISDIKSINDVNDEHLLLMTLRDVTCFIEWNSAENALHVNIIDVDLKPKEKWTHWTKTYSQLTSSQKIYHTSNK.

The short motif at 123 to 127 is the EXKPK motif element; that stretch reads ELKPK.

This sequence belongs to the IPK1 type 1 family.

It localises to the nucleus. The catalysed reaction is 1D-myo-inositol 1,3,4,5,6-pentakisphosphate + ATP = 1D-myo-inositol hexakisphosphate + ADP + H(+). Its function is as follows. Has kinase activity and phosphorylates inositol-1,3,4,5,6-pentakisphosphate (Ins(1,3,4,5,6)P5) to produce 1,2,3,4,5,6-hexakisphosphate (InsP6), also known as phytate. This is Inositol-pentakisphosphate 2-kinase (IPK1) from Saccharomyces cerevisiae (strain ATCC 204508 / S288c) (Baker's yeast).